The primary structure comprises 352 residues: 3-isopropylmalate dehydrogenase (352 aa).

An NAD(+)-binding site is contributed by 76-89; that stretch reads GPKWENLPHEHKPE. 4 residues coordinate substrate: Arg96, Arg106, Arg134, and Asp219. Residues Asp219, Asp243, and Asp247 each coordinate Mg(2+). NAD(+) is bound at residue 276-288; the sequence is GSAPDIAGQNKAN.

It belongs to the isocitrate and isopropylmalate dehydrogenases family. LeuB type 1 subfamily. In terms of assembly, homodimer. Mg(2+) is required as a cofactor. It depends on Mn(2+) as a cofactor.

The protein localises to the cytoplasm. It carries out the reaction (2R,3S)-3-isopropylmalate + NAD(+) = 4-methyl-2-oxopentanoate + CO2 + NADH. It participates in amino-acid biosynthesis; L-leucine biosynthesis; L-leucine from 3-methyl-2-oxobutanoate: step 3/4. In terms of biological role, catalyzes the oxidation of 3-carboxy-2-hydroxy-4-methylpentanoate (3-isopropylmalate) to 3-carboxy-4-methyl-2-oxopentanoate. The product decarboxylates to 4-methyl-2 oxopentanoate. This Chlorobium chlorochromatii (strain CaD3) protein is 3-isopropylmalate dehydrogenase.